The following is a 366-amino-acid chain: Inactive protein RESTRICTED TEV MOVEMENT 2 (366 aa).

Residues 14 to 121 (VQYEDFVPKS…LPETSRTEAA (108 aa)) form the sHSP domain. Residues 129 to 133 (LEEKR) form an A-1 repeat. The segment at 129–220 (LEEKRLLEES…LEERRLEERK (92 aa)) is 6 X 5 AA repeats A of L-E-E-[SKR]-[ERK]. Residues 135–139 (LEESR) form an A-2 repeat. One copy of the A-3 repeat lies at 156 to 160 (LEEKE). The B-1 repeat unit spans residues 163 to 176 (IRKLQEEAKAKEEA). The tract at residues 163–206 (IRKLQEEAKAKEEAEMRKLQEEAKANEEAAAKKLQEEIEAKEKL) is 3 X 14 AA repeats B of [IMA]-[RK]-K-L-Q-E-E-A-K-A-K-E-[EK]-[LA]. The stretch at 178-191 (MRKLQEEAKANEEA) is one B-2 repeat. The B-3 repeat unit spans residues 193–205 (AKKLQEEIEAKEK). The stretch at 206–210 (LEERK) is one A-4 repeat. One copy of the A-5 repeat lies at 211–215 (LEERR). Residues 216–220 (LEERK) form an A-6 repeat. A helical transmembrane segment spans residues 322–342 (LMMNVGVAALVIFALGAYVSY). The interval 345–366 (CSSSSSSSSSSPSSSSSSTKPE) is disordered. Positions 346–366 (SSSSSSSSSSPSSSSSSTKPE) are enriched in low complexity.

This sequence belongs to the small heat shock protein (HSP20) family.

Its subcellular location is the cell membrane. Seems to not be involved in heat resistance. Unable to mediate restriction of long-distance movement of the pathogenic tobacco etch virus (TEV) without causing a hypersensitive response or inducing systemic acquired resistance. The polypeptide is Inactive protein RESTRICTED TEV MOVEMENT 2 (RTM2) (Arabidopsis thaliana (Mouse-ear cress)).